Consider the following 135-residue polypeptide: MADFTVLDKQDEIYNVIDKKKAEGYSENELVVVSKSKLHLDNLHDSQVTLIATSGSFSDRMSKLLTGEDGEEAVLARYELSEEQTEKYKKDILDGKFLVIANKDNSSHDEVEENNSAYEEIDITHYANESKGPKS.

Residues 105–135 (NSSHDEVEENNSAYEEIDITHYANESKGPKS) form a disordered region.

Belongs to the UPF0355 family.

In Staphylococcus haemolyticus (strain JCSC1435), this protein is UPF0355 protein SH2586.